Consider the following 261-residue polypeptide: Immediate-early protein IE-0 (261 aa).

An RING-type zinc finger spans residues 212–257 (CNVCKEISTDERFLKPKECCEYAICNACCVNMWKTATTHAKCPACR).

As to quaternary structure, interacts with proteins C42 and FP25. Interacts with host beta-tubulin. Interacts with Ac66 and vUb.

Its subcellular location is the host nucleus. It localises to the host cytoplasm. The protein localises to the virion. In terms of biological role, putative viral E3 ligase that plays an essential regulatory role in both viral DNA replication and transcriptional transactivation. The role in transcription has been shown to include activation of gene expression from early viral promoters. Also promotes the efficient egress of nucleocapsids from the host nucleus. May act as an E3 ligase that promotes ubiquitination of nucleocapsids proteins by vUbi and subsequent viral egress for the host nucleus. This chain is Immediate-early protein IE-0 (IE0), found in Lepidoptera (butterflies and moths).